The sequence spans 312 residues: Bifunctional pinoresinol-lariciresinol reductase (312 aa).

NADP(+) contacts are provided by residues 10–16 (GGTGYIG), Arg-35, and Lys-44. Lys-136 functions as the Proton acceptor in the catalytic mechanism. Position 140 (Arg-140) interacts with NADP(+). His-268 lines the substrate pocket.

The protein belongs to the NmrA-type oxidoreductase family. Isoflavone reductase subfamily. In terms of assembly, dimer. Expressed in seed coats, but not in embryos, leaves, stems and roots.

Its function is as follows. Reductase involved in lignan biosynthesis. Catalyzes the sequential conversion of pinoresinol into lariciresinol and of lariciresinol into secoisolariciresinol. Abstracts the 4R-hydride from the NADPH cofactor during catalysis. The chain is Bifunctional pinoresinol-lariciresinol reductase from Linum usitatissimum (Flax).